The sequence spans 776 residues: Ent-8-alpha-hydroxylabd-13-en-15-yl diphosphate synthase CPS4, chloroplastic (776 aa).

A chloroplast-targeting transit peptide spans 1 to 60; sequence MSFASNATGFRIPLTTCVYPSPILRFNAKVGSGSSYGTTEAQRNMKCVDGIGRSRVVAVA. Position 226 (Lys226) interacts with substrate. Mg(2+) is bound by residues Asp357 and Asp359. Residues 357–360 carry the DXDD motif motif; sequence DSDD. Lys443 lines the substrate pocket.

The protein belongs to the terpene synthase family. It depends on Mg(2+) as a cofactor.

The protein localises to the plastid. Its subcellular location is the chloroplast. The catalysed reaction is ent-8alpha-hydroxylabd-13-en-15-yl diphosphate = (2E,6E,10E)-geranylgeranyl diphosphate + H2O. The protein operates within secondary metabolite biosynthesis; terpenoid biosynthesis. Its function is as follows. Involved in diterpenoid biosynthesis. Catalyzes the conversion of all-trans-geranylgeranyl diphosphate to ent-8alpha-hydroxylabd-13-en-15-yl diphosphate. The protein is Ent-8-alpha-hydroxylabd-13-en-15-yl diphosphate synthase CPS4, chloroplastic of Salvia miltiorrhiza (Chinese sage).